Here is a 383-residue protein sequence, read N- to C-terminus: Forkhead box protein I3-B (383 aa).

Residues 1–12 are compositionally biased toward polar residues; it reads MTSYESQGQSPT. Disordered regions lie at residues 1 to 55, 215 to 277, and 317 to 348; these read MTSY…YELG, DNGN…PCLS, and TTGFSTFTPSTTVSDWASPLPPPPPMSSSPSH. Positions 25-35 are enriched in low complexity; the sequence is PPELSLYSDSY. A DNA-binding region (fork-head) is located at residues 130-224; sequence RPPYSYSALI…DNGNFRRKRK (95 aa). Residues 220–226 carry the Nuclear localization signal motif; the sequence is RRKRKRK. The segment covering 234-249 has biased composition (low complexity); that stretch reads SSSGGNESGDSNGRGS. The segment covering 250-277 has biased composition (polar residues); it reads PKSQSIDISTSPEKGPSPASTGPSPCLS. Residues 317–330 are compositionally biased toward low complexity; sequence TTGFSTFTPSTTVS.

As to expression, expressed in ionocyte precursors.

The protein resides in the nucleus. Transcription factor required for epithelial cell differentiation. Involved in specification of skin ionocytes from epidermal precursors. The polypeptide is Forkhead box protein I3-B (Danio rerio (Zebrafish)).